The chain runs to 213 residues: U1 small nuclear ribonucleoprotein C (213 aa).

A Matrin-type zinc finger spans residues Y4 to S36. Positions A143–V166 are enriched in pro residues. The interval A143–H213 is disordered. Residues P167–S180 show a composition bias toward low complexity.

Belongs to the U1 small nuclear ribonucleoprotein C family. U1 snRNP is composed of the 7 core Sm proteins B/B', D1, D2, D3, E, F and G that assemble in a heptameric protein ring on the Sm site of the small nuclear RNA to form the core snRNP, and at least 3 U1 snRNP-specific proteins U1-70K, U1-A and U1-C. U1-C interacts with U1 snRNA and the 5' splice-site region of the pre-mRNA.

It localises to the nucleus. In terms of biological role, component of the spliceosomal U1 snRNP, which is essential for recognition of the pre-mRNA 5' splice-site and the subsequent assembly of the spliceosome. U1-C is directly involved in initial 5' splice-site recognition for both constitutive and regulated alternative splicing. The interaction with the 5' splice-site seems to precede base-pairing between the pre-mRNA and the U1 snRNA. Stimulates commitment or early (E) complex formation by stabilizing the base pairing of the 5' end of the U1 snRNA and the 5' splice-site region. The chain is U1 small nuclear ribonucleoprotein C from Vitis vinifera (Grape).